A 741-amino-acid chain; its full sequence is Zinc finger protein 425 (741 aa).

The region spanning 1–69 (DDVALYFSGQ…EQGCLDKTRR (69 aa)) is the KRAB domain. 2 disordered regions span residues 67-86 (TRRTTSPPTDEQLDMKDTGK) and 128-169 (RRDT…TPGR). Polar residues predominate over residues 132 to 151 (FQSPSLQETEIPNKKVSITA). Residues 153-168 (DPDKKDLRHKPRETPG) are compositionally biased toward basic and acidic residues. C2H2-type zinc fingers lie at residues 179–201 (YSCYVCRKVFQVRRDLLKHKRSH), 235–257 (FQCSECEKSYFLKGSLVTHQVVH), 263–285 (YPCPECDKTFRYRANLKKHLCLH), 291–313 (FCCGECGRAFVQQCELTEHLRLH), 319–341 (FQCPQCDRCFRLKRGMKVHLSQH), 347–369 (FHCPECGRSFSRKAALKTHQRTH), 375–397 (FSCDECGRKFIYKIKLDEHIRVH), 403–425 (FSCPECNKSFRLKRSLKAHGLQH), 431–453 (FQCPECSRGFFWRNAMRAHQRLH), 459–481 (FPCAECGKRFTRPSKLACHTRVH), 487–509 (FPCGECKKTFSQQSRLTQHLKVH), 515–537 (FSCAECGRSFRRRAHLTEHTRLH), 543–565 (FQCPECDKSFSWKASMKFHQRMH), 571–593 (FACSECGKTYTHQSQLTEHLRLH), 599–621 (YQCPECQKTFRLKGNLKSHLLQH), 627–649 (FSCVMCGKSFTQQYRLTEHIRVH), 655–677 (FQCPECDKSYCIRGSLKVHLYTH), 683–705 (FQCPECGKGFLQKRSLKAHLCLH), and 711–733 (FSCDECGRSFTYVGALKTHIAVH).

It belongs to the krueppel C2H2-type zinc-finger protein family.

It localises to the nucleus. The protein resides in the cytoplasm. Functionally, acts as a transcriptional repressor. This is Zinc finger protein 425 (ZNF425) from Macaca fascicularis (Crab-eating macaque).